Reading from the N-terminus, the 174-residue chain is ATP-dependent protease subunit HslV (174 aa).

The active site involves T4. The Na(+) site is built by A159, C162, and T165.

The protein belongs to the peptidase T1B family. HslV subfamily. As to quaternary structure, a double ring-shaped homohexamer of HslV is capped on each side by a ring-shaped HslU homohexamer. The assembly of the HslU/HslV complex is dependent on binding of ATP.

The protein localises to the cytoplasm. It carries out the reaction ATP-dependent cleavage of peptide bonds with broad specificity.. With respect to regulation, allosterically activated by HslU binding. Its function is as follows. Protease subunit of a proteasome-like degradation complex believed to be a general protein degrading machinery. The protein is ATP-dependent protease subunit HslV of Moorella thermoacetica (strain ATCC 39073 / JCM 9320).